The chain runs to 67 residues: Medusin-S1 (67 aa).

The first 22 residues, 1–22 (MSFLKKSLFLVLFLGFVSLSIC), serve as a signal peptide directing secretion. A propeptide spanning residues 23-48 (EEEKRETEEKENEQEDDREERSEEKR) is cleaved from the precursor. The segment at 26–47 (KRETEEKENEQEDDREERSEEK) is disordered. Acidic residues predominate over residues 31–40 (EKENEQEDDR). A Leucine amide modification is found at leucine 66.

Belongs to the frog skin active peptide (FSAP) family. Medusin subfamily. As to expression, expressed by the skin glands.

It is found in the secreted. The protein resides in the target cell membrane. In terms of biological role, antibacterial peptide with moderate activity against the Gram-positive bacteria (S.aureus ATCC 25923, MIC=25 uM), but not against all other bacteria (both Gram-positive and Gram-negative) tested. Does not show activity against fungi, and against Leishmania species. It adopts an alpha-helical structure with very low amphipathicity in membrane environments. The protein is Medusin-S1 of Phyllomedusa sauvagei (Sauvage's leaf frog).